The chain runs to 215 residues: Ribosomal RNA small subunit methyltransferase G (215 aa).

S-adenosyl-L-methionine is bound by residues glycine 77, phenylalanine 82, 130-131 (IE), and arginine 146.

Belongs to the methyltransferase superfamily. RNA methyltransferase RsmG family.

It is found in the cytoplasm. It carries out the reaction guanosine(527) in 16S rRNA + S-adenosyl-L-methionine = N(7)-methylguanosine(527) in 16S rRNA + S-adenosyl-L-homocysteine. Specifically methylates the N7 position of guanine in position 527 of 16S rRNA. The protein is Ribosomal RNA small subunit methyltransferase G of Bartonella quintana (strain Toulouse) (Rochalimaea quintana).